The chain runs to 311 residues: tRNA N6-adenosine threonylcarbamoyltransferase (311 aa).

Fe cation is bound by residues H108 and H112. Substrate-binding positions include 130–134 (LVSGG), D163, G176, D180, and N270. A Fe cation-binding site is contributed by D294.

Belongs to the KAE1 / TsaD family. Fe(2+) serves as cofactor.

Its subcellular location is the cytoplasm. It catalyses the reaction L-threonylcarbamoyladenylate + adenosine(37) in tRNA = N(6)-L-threonylcarbamoyladenosine(37) in tRNA + AMP + H(+). In terms of biological role, required for the formation of a threonylcarbamoyl group on adenosine at position 37 (t(6)A37) in tRNAs that read codons beginning with adenine. Is involved in the transfer of the threonylcarbamoyl moiety of threonylcarbamoyl-AMP (TC-AMP) to the N6 group of A37, together with TsaE and TsaB. TsaD likely plays a direct catalytic role in this reaction. This chain is tRNA N6-adenosine threonylcarbamoyltransferase, found in Metamycoplasma arthritidis (strain 158L3-1) (Mycoplasma arthritidis).